The following is a 156-amino-acid chain: Protein-export protein SecB (156 aa).

Belongs to the SecB family. Homotetramer, a dimer of dimers. One homotetramer interacts with 1 SecA dimer.

It is found in the cytoplasm. One of the proteins required for the normal export of preproteins out of the cell cytoplasm. It is a molecular chaperone that binds to a subset of precursor proteins, maintaining them in a translocation-competent state. It also specifically binds to its receptor SecA. The sequence is that of Protein-export protein SecB from Aeromonas hydrophila subsp. hydrophila (strain ATCC 7966 / DSM 30187 / BCRC 13018 / CCUG 14551 / JCM 1027 / KCTC 2358 / NCIMB 9240 / NCTC 8049).